The following is a 24-amino-acid chain: Waglerin-3 (24 aa).

The span at 1–10 shows a compositional bias: basic and acidic residues; it reads SLGGKPDLRP. Positions 1–24 are disordered; sequence SLGGKPDLRPCHPPCHYIPRPKPR. Cys-11 and Cys-15 are oxidised to a cystine.

It belongs to the waglerin family. Waglerin-1 is monomeric. Amidation of the waglerin-1 C-terminus increases the affinity by 2-fold. In terms of tissue distribution, expressed by the venom gland.

Its subcellular location is the secreted. Its function is as follows. Waglerin-1 selectively blocks the epsilon subunit of muscle nicotinic acetylcholine receptor (nAChR). Also has effects on rodent ionotropic GABA(A) receptors (GABR), since it potentiates I(GABA) in some neurons and depresses I(GABA) in others. In mice, it elicits tachypnea, ocular proptosis, rapid collapse and spasms, whereas no toxic effects on respiration and blood pressure are observed in rats. In terms of biological role, waglerin-3 selectively blocks the epsilon subunit of muscle nicotinic acetylcholine receptor (nAChR). It elicits tachypnea, ocular proptosis, rapid collapse and spasms in mice. It causes death by respiratory failure. This is Waglerin-3 from Tropidolaemus wagleri (Wagler's pit viper).